We begin with the raw amino-acid sequence, 108 residues long: L-rhamnose mutarotase (108 aa).

Tyr-19 is a substrate binding site. Catalysis depends on His-23, which acts as the Proton donor. Substrate is bound by residues Tyr-45 and 80–81 (WW).

Belongs to the rhamnose mutarotase family. Homodimer.

It localises to the cytoplasm. It carries out the reaction alpha-L-rhamnose = beta-L-rhamnose. Its pathway is carbohydrate metabolism; L-rhamnose metabolism. Its function is as follows. Involved in the anomeric conversion of L-rhamnose. This is L-rhamnose mutarotase from Ligilactobacillus salivarius (strain UCC118) (Lactobacillus salivarius).